The primary structure comprises 264 residues: Endoglucanase S (264 aa).

Positions 1–32 (MQTVNTQPHRIFRVLLPAVFSSLLLSSLTVSA) are cleaved as a signal peptide.

Belongs to the glycosyl hydrolase 12 (cellulase H) family.

It catalyses the reaction Endohydrolysis of (1-&gt;4)-beta-D-glucosidic linkages in cellulose, lichenin and cereal beta-D-glucans.. This is Endoglucanase S (celS) from Pectobacterium parmentieri.